The primary structure comprises 119 residues: Ribonuclease P protein component (119 aa).

It belongs to the RnpA family. Consists of a catalytic RNA component (M1 or rnpB) and a protein subunit.

It catalyses the reaction Endonucleolytic cleavage of RNA, removing 5'-extranucleotides from tRNA precursor.. In terms of biological role, RNaseP catalyzes the removal of the 5'-leader sequence from pre-tRNA to produce the mature 5'-terminus. It can also cleave other RNA substrates such as 4.5S RNA. The protein component plays an auxiliary but essential role in vivo by binding to the 5'-leader sequence and broadening the substrate specificity of the ribozyme. The polypeptide is Ribonuclease P protein component (Salmonella schwarzengrund (strain CVM19633)).